Here is a 207-residue protein sequence, read N- to C-terminus: Ribosomal RNA small subunit methyltransferase G (207 aa).

S-adenosyl-L-methionine contacts are provided by residues Gly-73, Leu-78, 124 to 125 (VE), and Arg-139.

It belongs to the methyltransferase superfamily. RNA methyltransferase RsmG family.

The protein resides in the cytoplasm. The catalysed reaction is guanosine(527) in 16S rRNA + S-adenosyl-L-methionine = N(7)-methylguanosine(527) in 16S rRNA + S-adenosyl-L-homocysteine. Functionally, specifically methylates the N7 position of guanine in position 527 of 16S rRNA. This chain is Ribosomal RNA small subunit methyltransferase G, found in Klebsiella pneumoniae (strain 342).